The following is a 132-amino-acid chain: MNLKQIAKDTAKTLQSYLTYQALMTVLAQLGETNPPLALWLHTFSVGKVQDGEAYVKELFREQPDLALRIMTVREHIAEEVAEFLPEMVRSGIQQANMEQRRQHLERMTHLSLSNPSPESEQQTISDTDWDH.

Residues 110–132 (HLSLSNPSPESEQQTISDTDWDH) are disordered. A compositionally biased stretch (polar residues) spans 111 to 132 (LSLSNPSPESEQQTISDTDWDH).

The protein belongs to the RbcX family. Homodimer. Interacts with the exposed C-terminal peptide of RbcL via its central cleft, contacts a second RbcL monomer via its peripheral polar surface. RbcX and Raf1 can bind simultaneously to RbcL.

Its subcellular location is the carboxysome. The protein localises to the cytoplasm. An RbcL-specific chaperone. The central cleft of the RbcX homodimer (RbcX2) binds the C-terminus of an RbcL monomer, stabilizing the C-terminus and probably preventing its reassociation with chaperonin GroEL-ES. At the same time the peripheral region of RbcX2 binds a second RbcL monomer, bridging the RbcL homodimers in the correct orientation. The RbcX2(2)-bound RbcL dimers then assemble into the RbcL8 core (RbcL8-(RbcX2)8). RbcS binding triggers the release of RbcX2. In terms of biological role, when rbcL-rbcX-rbcS or rbcL-rbcS were overexpressed in E.coli no change in reconstituted RuBisCO activity was observed, which suggests RbcX plays no role in RuBisCO assembly in this system. However in PubMed:8472962 E.coli chaperones groL and groS were also overexpressed, which may compensate for lack of rbcX. In Nostoc sp. (strain PCC 7120 / SAG 25.82 / UTEX 2576), this protein is RuBisCO chaperone RbcX.